The sequence spans 382 residues: NADH-ubiquinone oxidoreductase chain 2 (382 aa).

The next 12 membrane-spanning stretches (helical) occupy residues 1 to 21, 33 to 53, 54 to 74, 88 to 108, 123 to 143, 158 to 178, 188 to 208, 212 to 232, 239 to 259, 260 to 280, 284 to 304, and 305 to 325; these read MIEL…LLSL, FICQ…FALC, ILTV…FLLL, LVSF…LCGL, LKFL…FSAM, FWIL…MWSV, LLLY…ASSW, FSVG…AYGQ, FAYS…TAGF, HTLY…WNLT, LFAL…FFGK, and AWIF…AALF.

This sequence belongs to the complex I subunit 2 family.

It localises to the mitochondrion inner membrane. It carries out the reaction a ubiquinone + NADH + 5 H(+)(in) = a ubiquinol + NAD(+) + 4 H(+)(out). Core subunit of the mitochondrial membrane respiratory chain NADH dehydrogenase (Complex I) that is believed to belong to the minimal assembly required for catalysis. Complex I functions in the transfer of electrons from NADH to the respiratory chain. The immediate electron acceptor for the enzyme is believed to be ubiquinone. In Chlamydomonas reinhardtii (Chlamydomonas smithii), this protein is NADH-ubiquinone oxidoreductase chain 2 (ND2).